A 668-amino-acid chain; its full sequence is UvrABC system protein B (668 aa).

The Helicase ATP-binding domain maps to 31–416; it reads QGITDGVPAQ…RGHIIEQIIR (386 aa). 44-51 serves as a coordination point for ATP; it reads GTTGSGKT. The short motif at 97–120 is the Beta-hairpin element; that stretch reads YYDYYQPEAYIARSDTYIEKSLLI. Residues 433–596 form the Helicase C-terminal domain; that stretch reads QIDDLLEEIR…ITPQPIIKPI (164 aa). In terms of domain architecture, UVR spans 621–656; that stretch reads EASIKTYEEAMYQAAQEFQFDEAAKYRDLMNAAKKQ.

Belongs to the UvrB family. In terms of assembly, forms a heterotetramer with UvrA during the search for lesions. Interacts with UvrC in an incision complex.

The protein localises to the cytoplasm. Its function is as follows. The UvrABC repair system catalyzes the recognition and processing of DNA lesions. A damage recognition complex composed of 2 UvrA and 2 UvrB subunits scans DNA for abnormalities. Upon binding of the UvrA(2)B(2) complex to a putative damaged site, the DNA wraps around one UvrB monomer. DNA wrap is dependent on ATP binding by UvrB and probably causes local melting of the DNA helix, facilitating insertion of UvrB beta-hairpin between the DNA strands. Then UvrB probes one DNA strand for the presence of a lesion. If a lesion is found the UvrA subunits dissociate and the UvrB-DNA preincision complex is formed. This complex is subsequently bound by UvrC and the second UvrB is released. If no lesion is found, the DNA wraps around the other UvrB subunit that will check the other stand for damage. This Chlamydia trachomatis serovar D (strain ATCC VR-885 / DSM 19411 / UW-3/Cx) protein is UvrABC system protein B.